The following is a 305-amino-acid chain: Tyrosine recombinase XerC (305 aa).

Residues 1-94 (MSSVDEFLTY…ACRSYYAWLL (94 aa)) enclose the Core-binding (CB) domain. The region spanning 115–292 (KLPQVLDADE…DFQHLAKVYD (178 aa)) is the Tyr recombinase domain. Active-site residues include R154, K178, H244, R247, and H270. The O-(3'-phospho-DNA)-tyrosine intermediate role is filled by Y279.

The protein belongs to the 'phage' integrase family. XerC subfamily. In terms of assembly, forms a cyclic heterotetrameric complex composed of two molecules of XerC and two molecules of XerD.

Its subcellular location is the cytoplasm. In terms of biological role, site-specific tyrosine recombinase, which acts by catalyzing the cutting and rejoining of the recombining DNA molecules. The XerC-XerD complex is essential to convert dimers of the bacterial chromosome into monomers to permit their segregation at cell division. It also contributes to the segregational stability of plasmids. The chain is Tyrosine recombinase XerC from Xanthomonas axonopodis pv. citri (strain 306).